The chain runs to 330 residues: Polyprenyl transferase dpfgC (330 aa).

N34 is a glycosylation site (N-linked (GlcNAc...) asparagine). The next 7 helical transmembrane spans lie at 105 to 125 (ALCVLAAYLFCGAGMVWNDWI), 146 to 166 (VTTTEAMVWMTLQVIMSWGVL), 175 to 192 (VLKHLIPVMVASVLYPFG), 199 to 219 (KLMIYPQYILAFTIAWPAIPG), 237 to 257 (CLPLCIMVFFWTIYLNTAYSY), 273 to 293 (NIAGNHIHVLLVLLVSPIILA), and 310 to 330 (NFILGVWTILACAAEVFLTSA).

It belongs to the UbiA prenyltransferase family. The cofactor is Mg(2+).

It is found in the membrane. It functions in the pathway secondary metabolite biosynthesis; terpenoid biosynthesis. In terms of biological role, polyprenyl transferase; part of the gene cluster that mediates the biosynthesis of diterpenoid pyrones. The first step of the pathway is the synthesis of the alpha-pyrone moiety by the polyketide synthase dpfgA via condensation of one acetyl-CoA starter unit with 3 malonyl-CoA units and 2 methylations. The alpha-pyrone is then combined with geranylgeranyl pyrophosphate (GGPP) formed by the GGPP synthase dpfgD through the action of the prenyltransferase dpfgC to yield a linear alpha-pyrone diterpenoid. Subsequent steps in the diterpenoid pyrone biosynthetic pathway involve the decalin core formation, which is initiated by the epoxidation of the C10-C11 olefin by the FAD-dependent oxidoreductase dpfgE, and is followed by a cyclization cascade catalyzed by the terpene cyclase dpfgB. The short chain dehydrogenase/reductase dpfgG then oxidizes the 8S hydroxy group to a ketone and the short chain dehydrogenase/reductase dpfgH reduces the ketone to the 8R hydroxy group to yield higginsianin B. Higginsianin B is further methylated by the methyltransferase dpfgI to produce the intermediate named FDDP B. The cytochrome P450 monooxygenase dfgpJ then catalyzes a three-step oxidation at C-27 to generate a carboxylic acid as well as C-26 hydroxylation. Finally, methyltransferase dpfgK methylates the carboxylic acid generated by dpfgJ, yielding the final diterpenoid pyrones from the pathway which were named FDDP D and FDDP E. The chain is Polyprenyl transferase dpfgC from Gibberella zeae (strain ATCC MYA-4620 / CBS 123657 / FGSC 9075 / NRRL 31084 / PH-1) (Wheat head blight fungus).